Reading from the N-terminus, the 143-residue chain is Large ribosomal subunit protein uL13 (143 aa).

Belongs to the universal ribosomal protein uL13 family. In terms of assembly, part of the 50S ribosomal subunit.

Its function is as follows. This protein is one of the early assembly proteins of the 50S ribosomal subunit, although it is not seen to bind rRNA by itself. It is important during the early stages of 50S assembly. This is Large ribosomal subunit protein uL13 from Dehalococcoides mccartyi (strain ATCC BAA-2266 / KCTC 15142 / 195) (Dehalococcoides ethenogenes (strain 195)).